The sequence spans 306 residues: Curved DNA-binding protein (306 aa).

The region spanning 5–69 (DYYAIMGVKP…QRRAEYDQMW (65 aa)) is the J domain.

It is found in the cytoplasm. The protein localises to the nucleoid. In terms of biological role, DNA-binding protein that preferentially recognizes a curved DNA sequence. It is probably a functional analog of DnaJ; displays overlapping activities with DnaJ, but functions under different conditions, probably acting as a molecular chaperone in an adaptive response to environmental stresses other than heat shock. Lacks autonomous chaperone activity; binds native substrates and targets them for recognition by DnaK. Its activity is inhibited by the binding of CbpM. In Escherichia coli O157:H7, this protein is Curved DNA-binding protein.